A 36-amino-acid polypeptide reads, in one-letter code: Potassium channel toxin alpha-KTx 2.7 (36 aa).

Intrachain disulfides connect cysteine 7/cysteine 29, cysteine 13/cysteine 34, and cysteine 17/cysteine 36.

It belongs to the short scorpion toxin superfamily. Potassium channel inhibitor family. Alpha-KTx 02 subfamily. Expressed by the venom gland.

It is found in the secreted. Functionally, inhibitor of voltage-gated potassium channels (Kv). This protein is capable of displacing the binding of radio-labeled noxiustoxin (AC P08815) to rat brain synaptosomes with high affinity (about 100 pM). It is also capable of inhibiting transient potassium-currents (resembling I(A)-type currents), in cultured rat cerebellar granule cells. About 50% of the peak currents are reduced by application of a 1.5 uM solution of this toxin. Is lethal to mice (when less than 100 ug are injected). The protein is Potassium channel toxin alpha-KTx 2.7 of Centruroides limpidus (Mexican scorpion).